The chain runs to 46 residues: Myoregulin (46 aa).

The Cytoplasmic portion of the chain corresponds to 1-21 (MTGKNWILISTTTPKSLEDEI). Residues 22–42 (VGRLLKILFVIFVDLISIIYV) form a helical membrane-spanning segment. Residues 43–46 (VITS) lie on the Lumenal side of the membrane.

As to quaternary structure, homooligomer. Monomer. Interacts with ATP2A1/SERCA1. Interacts as a monomer with ATP2A2/SERCA2; the interaction inhibits ATP2A2 activity.

Its subcellular location is the sarcoplasmic reticulum membrane. Functionally, inhibits the activity of ATP2A1/SERCA1 ATPase in sarcoplasmic reticulum by decreasing the apparent affinity of the ATPase for Ca(2+), thereby acting as a key regulator of skeletal muscle activity. Its high expression in adult skeletal muscle, suggests that it constitutes the predominant regulator of ATP2A1/SERCA1 in adult skeletal muscle. Also inhibits the activity of ATP2A2/SERCA2 and ATP2A3/SERCA3. The chain is Myoregulin from Homo sapiens (Human).